The sequence spans 917 residues: Isoleucine--tRNA ligase (917 aa).

L-isoleucyl-5'-AMP is bound by residues proline 56, histidine 67, glutamate 554, glycine 555, aspartate 557, glutamine 558, and histidine 585. The short motif at 57–67 is the 'HIGH' region element; it reads PYANGNLHMGH. The short motif at 595–599 is the 'KMSKS' region element; the sequence is KMSKS. ATP is bound at residue lysine 598. TRNA(Ile) is bound by residues arginine 632 and glutamine 640. Zn(2+) contacts are provided by cysteine 886, cysteine 889, cysteine 906, and cysteine 909.

This sequence belongs to the class-I aminoacyl-tRNA synthetase family. IleS type 1 subfamily. As to quaternary structure, monomer. It depends on Zn(2+) as a cofactor.

Its subcellular location is the cytoplasm. It catalyses the reaction tRNA(Ile) + L-isoleucine + ATP = L-isoleucyl-tRNA(Ile) + AMP + diphosphate. Functionally, catalyzes the attachment of isoleucine to tRNA(Ile). As IleRS can inadvertently accommodate and process structurally similar amino acids such as valine, to avoid such errors it has two additional distinct tRNA(Ile)-dependent editing activities. One activity is designated as 'pretransfer' editing and involves the hydrolysis of activated Val-AMP. The other activity is designated 'posttransfer' editing and involves deacylation of mischarged Val-tRNA(Ile). In Staphylococcus aureus, this protein is Isoleucine--tRNA ligase (ileS).